The sequence spans 916 residues: Isoleucine--tRNA ligase (916 aa).

The 'HIGH' region motif lies at 57–67 (PYANGNLHMGH). Glu-554 lines the L-isoleucyl-5'-AMP pocket. The 'KMSKS' region signature appears at 595–599 (KMSKS). Residue Lys-598 participates in ATP binding. Zn(2+) contacts are provided by Cys-885, Cys-888, Cys-905, and Cys-908.

The protein belongs to the class-I aminoacyl-tRNA synthetase family. IleS type 1 subfamily. Monomer. The cofactor is Zn(2+).

The protein localises to the cytoplasm. The enzyme catalyses tRNA(Ile) + L-isoleucine + ATP = L-isoleucyl-tRNA(Ile) + AMP + diphosphate. In terms of biological role, catalyzes the attachment of isoleucine to tRNA(Ile). As IleRS can inadvertently accommodate and process structurally similar amino acids such as valine, to avoid such errors it has two additional distinct tRNA(Ile)-dependent editing activities. One activity is designated as 'pretransfer' editing and involves the hydrolysis of activated Val-AMP. The other activity is designated 'posttransfer' editing and involves deacylation of mischarged Val-tRNA(Ile). The polypeptide is Isoleucine--tRNA ligase (Staphylococcus saprophyticus subsp. saprophyticus (strain ATCC 15305 / DSM 20229 / NCIMB 8711 / NCTC 7292 / S-41)).